A 130-amino-acid polypeptide reads, in one-letter code: Small ribosomal subunit protein bS18 (130 aa).

2 stretches are compositionally biased toward basic and acidic residues: residues 98–108 and 117–130; these read KKMEESVKSAE and EESKPKRTRKAKTE. Residues 98 to 130 form a disordered region; that stretch reads KKMEESVKSAEPKATAEATEESKPKRTRKAKTE.

It belongs to the bacterial ribosomal protein bS18 family. In terms of assembly, part of the 30S ribosomal subunit. Forms a tight heterodimer with protein bS6.

Its function is as follows. Binds as a heterodimer with protein bS6 to the central domain of the 16S rRNA, where it helps stabilize the platform of the 30S subunit. The chain is Small ribosomal subunit protein bS18 from Metamycoplasma arthritidis (strain 158L3-1) (Mycoplasma arthritidis).